We begin with the raw amino-acid sequence, 205 residues long: Guanylate kinase (205 aa).

Residues 3-181 (GSLYIISAPS…ALSELHSIFL (179 aa)) enclose the Guanylate kinase-like domain. 10 to 17 (APSGAGKT) contributes to the ATP binding site.

It belongs to the guanylate kinase family.

It localises to the cytoplasm. The enzyme catalyses GMP + ATP = GDP + ADP. In terms of biological role, essential for recycling GMP and indirectly, cGMP. The sequence is that of Guanylate kinase from Hydrogenovibrio crunogenus (strain DSM 25203 / XCL-2) (Thiomicrospira crunogena).